The sequence spans 295 residues: Foldase protein PrsA (295 aa).

The signal sequence occupies residues Met1 to Ala19. Residue Cys20 is the site of N-palmitoyl cysteine attachment. Residue Cys20 is the site of S-diacylglycerol cysteine attachment. The region spanning Glu136 to Asn229 is the PpiC domain.

This sequence belongs to the PrsA family.

Its subcellular location is the cell membrane. The enzyme catalyses [protein]-peptidylproline (omega=180) = [protein]-peptidylproline (omega=0). Its function is as follows. Plays a major role in protein secretion by helping the post-translocational extracellular folding of several secreted proteins. The chain is Foldase protein PrsA from Pediococcus pentosaceus (strain ATCC 25745 / CCUG 21536 / LMG 10740 / 183-1w).